The chain runs to 354 residues: Uroporphyrinogen decarboxylase (354 aa).

Residues 27 to 31, Asp77, Tyr154, Ser209, and His327 contribute to the substrate site; that span reads RQAGR.

This sequence belongs to the uroporphyrinogen decarboxylase family. In terms of assembly, homodimer.

It is found in the cytoplasm. It carries out the reaction uroporphyrinogen III + 4 H(+) = coproporphyrinogen III + 4 CO2. It functions in the pathway porphyrin-containing compound metabolism; protoporphyrin-IX biosynthesis; coproporphyrinogen-III from 5-aminolevulinate: step 4/4. Its function is as follows. Catalyzes the decarboxylation of four acetate groups of uroporphyrinogen-III to yield coproporphyrinogen-III. This is Uroporphyrinogen decarboxylase from Pseudomonas savastanoi pv. phaseolicola (strain 1448A / Race 6) (Pseudomonas syringae pv. phaseolicola (strain 1448A / Race 6)).